The chain runs to 421 residues: Alpha-1-antitrypsin-related protein (421 aa).

The signal sequence occupies residues methionine 1–serine 21. Residues asparagine 56, asparagine 110, asparagine 148, and asparagine 274 are each glycosylated (N-linked (GlcNAc...) asparagine).

This sequence belongs to the serpin family. Interacts with CANX and PDIA3. Post-translationally, glycosylated. In terms of tissue distribution, expressed in the liver, leukocytes and testis. Also detected in brain, colon, uterus, esophagus, spleen, trachea, kidney and lung.

It localises to the endoplasmic reticulum. In terms of biological role, putative serine protease inhibitor. The protein is Alpha-1-antitrypsin-related protein (SERPINA2) of Homo sapiens (Human).